Here is a 714-residue protein sequence, read N- to C-terminus: K(+)-insensitive pyrophosphate-energized proton pump (714 aa).

The N-terminal stretch at 1 to 20 is a signal peptide; that stretch reads MRMTVIPIVILCGVLSVVYA. 4 helical membrane passes run 52 to 74, 85 to 105, 128 to 148, and 166 to 186; these read LTRQYLTIAIVGLIVAVLAWYLL, GAVLSGVAGFVGMHVSVRANL, ITGMLVAGLALLGVSIYYFVL, and VSLGFGASLISIFARLGGGIF. Lys-188 serves as a coordination point for substrate. Residues Asp-191, Asp-195, Asn-218, and Asp-221 each coordinate Mg(2+). Transmembrane regions (helical) follow at residues 238–258, 263–283, 298–318, 333–353, 383–403, and 411–431; these read AVSVVATMVLAAIFFAGTPIL, VYPLAICGACILTSIAGTFFV, GLIATGVFSVAGLAVATYATV, GTNLFFCGLVGLVVTALIVVI, GLAVSLESTALPAIVIVGGII, and LFGTGIAVTAMLGLAGMIVAL. Mg(2+) is bound at residue Asp-439. 4 consecutive transmembrane segments (helical) span residues 470-490, 522-542, 591-611, and 618-638; these read AVTKGYAIGSAGLGALVLFAA, YVVAGLLFGGLIPYLFGGIAM, VIPSLLPVLAPLVVYFGVLLI, and AFAALGASLLGVIINGLFVAI. 3 residues coordinate Ca(2+): Asp-648, Asp-680, and Asp-684. Residue Lys-687 coordinates substrate. The chain crosses the membrane as a helical span at residues 693–713; the sequence is AVNPAIKITNIVALLLLAVLA.

The protein belongs to the H(+)-translocating pyrophosphatase (TC 3.A.10) family. K(+)-insensitive subfamily. Homodimer. It depends on Mg(2+) as a cofactor.

The protein localises to the acidocalcisome membrane. It catalyses the reaction diphosphate + H2O + H(+)(in) = 2 phosphate + 2 H(+)(out). In terms of biological role, proton pump that utilizes the energy of pyrophosphate hydrolysis as the driving force for proton movement across the membrane. Generates a proton motive force. This is K(+)-insensitive pyrophosphate-energized proton pump from Agrobacterium fabrum (strain C58 / ATCC 33970) (Agrobacterium tumefaciens (strain C58)).